The following is a 543-amino-acid chain: CTP synthase (543 aa).

The tract at residues 1–265 (MARYIFITGG…DDEVLAAFGI (265 aa)) is amidoligase domain. Position 13 (Ser13) interacts with CTP. A UTP-binding site is contributed by Ser13. ATP is bound at residue 14–19 (SLGKGL). Tyr54 is a binding site for L-glutamine. ATP is bound at residue Asp71. Asp71 and Glu139 together coordinate Mg(2+). Residues 146–148 (DIE), 186–191 (KTKPTQ), and Lys222 each bind CTP. UTP-binding positions include 186-191 (KTKPTQ) and Lys222. Residue 238-240 (RDV) participates in ATP binding. The Glutamine amidotransferase type-1 domain maps to 291-542 (TIAIVGKYTG…IQAAMVQSRL (252 aa)). Gly353 contributes to the L-glutamine binding site. Cys380 functions as the Nucleophile; for glutamine hydrolysis in the catalytic mechanism. L-glutamine contacts are provided by residues 381–384 (FGMQ), Glu404, and Arg470. Active-site residues include His515 and Glu517.

Belongs to the CTP synthase family. In terms of assembly, homotetramer.

It catalyses the reaction UTP + L-glutamine + ATP + H2O = CTP + L-glutamate + ADP + phosphate + 2 H(+). It carries out the reaction L-glutamine + H2O = L-glutamate + NH4(+). The enzyme catalyses UTP + NH4(+) + ATP = CTP + ADP + phosphate + 2 H(+). It functions in the pathway pyrimidine metabolism; CTP biosynthesis via de novo pathway; CTP from UDP: step 2/2. With respect to regulation, allosterically activated by GTP, when glutamine is the substrate; GTP has no effect on the reaction when ammonia is the substrate. The allosteric effector GTP functions by stabilizing the protein conformation that binds the tetrahedral intermediate(s) formed during glutamine hydrolysis. Inhibited by the product CTP, via allosteric rather than competitive inhibition. In terms of biological role, catalyzes the ATP-dependent amination of UTP to CTP with either L-glutamine or ammonia as the source of nitrogen. Regulates intracellular CTP levels through interactions with the four ribonucleotide triphosphates. The sequence is that of CTP synthase from Bradyrhizobium diazoefficiens (strain JCM 10833 / BCRC 13528 / IAM 13628 / NBRC 14792 / USDA 110).